A 764-amino-acid chain; its full sequence is DNA polymerase 3 (764 aa).

The protein belongs to the DNA polymerase type-B family.

It catalyses the reaction DNA(n) + a 2'-deoxyribonucleoside 5'-triphosphate = DNA(n+1) + diphosphate. This Saccharolobus solfataricus (strain ATCC 35092 / DSM 1617 / JCM 11322 / P2) (Sulfolobus solfataricus) protein is DNA polymerase 3 (dpo3).